A 1370-amino-acid polypeptide reads, in one-letter code: DNA-directed RNA polymerase subunit beta (1370 aa).

Belongs to the RNA polymerase beta chain family. In terms of assembly, the RNAP catalytic core consists of 2 alpha, 1 beta, 1 beta' and 1 omega subunit. When a sigma factor is associated with the core the holoenzyme is formed, which can initiate transcription.

It carries out the reaction RNA(n) + a ribonucleoside 5'-triphosphate = RNA(n+1) + diphosphate. Its function is as follows. DNA-dependent RNA polymerase catalyzes the transcription of DNA into RNA using the four ribonucleoside triphosphates as substrates. This is DNA-directed RNA polymerase subunit beta from Albidiferax ferrireducens (strain ATCC BAA-621 / DSM 15236 / T118) (Rhodoferax ferrireducens).